The primary structure comprises 235 residues: Phosphoribosylaminoimidazole-succinocarboxamide synthase (235 aa).

Belongs to the SAICAR synthetase family.

The catalysed reaction is 5-amino-1-(5-phospho-D-ribosyl)imidazole-4-carboxylate + L-aspartate + ATP = (2S)-2-[5-amino-1-(5-phospho-beta-D-ribosyl)imidazole-4-carboxamido]succinate + ADP + phosphate + 2 H(+). The protein operates within purine metabolism; IMP biosynthesis via de novo pathway; 5-amino-1-(5-phospho-D-ribosyl)imidazole-4-carboxamide from 5-amino-1-(5-phospho-D-ribosyl)imidazole-4-carboxylate: step 1/2. The polypeptide is Phosphoribosylaminoimidazole-succinocarboxamide synthase (Streptococcus gordonii (strain Challis / ATCC 35105 / BCRC 15272 / CH1 / DL1 / V288)).